The sequence spans 133 residues: Small ribosomal subunit protein uS9 (133 aa).

Belongs to the universal ribosomal protein uS9 family.

This is Small ribosomal subunit protein uS9 from Picrophilus torridus (strain ATCC 700027 / DSM 9790 / JCM 10055 / NBRC 100828 / KAW 2/3).